A 592-amino-acid polypeptide reads, in one-letter code: Membrane protein insertase YidC (592 aa).

A run of 5 helical transmembrane segments spans residues L8–G28, A363–L385, I430–Y450, I493–M513, and I531–V551.

The protein belongs to the OXA1/ALB3/YidC family. Type 1 subfamily. In terms of assembly, interacts with the Sec translocase complex via SecD. Specifically interacts with transmembrane segments of nascent integral membrane proteins during membrane integration.

It is found in the cell inner membrane. Functionally, required for the insertion and/or proper folding and/or complex formation of integral membrane proteins into the membrane. Involved in integration of membrane proteins that insert both dependently and independently of the Sec translocase complex, as well as at least some lipoproteins. Aids folding of multispanning membrane proteins. The chain is Membrane protein insertase YidC from Maricaulis maris (strain MCS10) (Caulobacter maris).